Reading from the N-terminus, the 386-residue chain is Ribonucleoside-diphosphate reductase subunit M2 (386 aa).

Residue Ser20 is modified to Phosphoserine. The residue at position 33 (Thr33) is a Phosphothreonine. Positions 49 to 51 (RRI) match the Cy motif. Fe cation-binding residues include Asp139, Glu170, and His173. Tyr177 is an active-site residue. Glu233, Glu267, and His270 together coordinate Fe cation.

It belongs to the ribonucleoside diphosphate reductase small chain family. As to quaternary structure, heterodimer of a large and a small subunit. Interacts (via Cy motif and when phosphorylated at Thr-33) with CCNF; the interaction occurs exclusively in G2 and early M. Requires Fe cation as cofactor. Post-translationally, phosphorylation on Ser-20 relieves the inhibitory effect on Wnt signaling. Phosphorylated on Thr-33 by CDK1 and CDK2; predominantly in G2 and M phase. Ubiquitinated by the SCF(CCNF) E3 ubiquitin-protein ligase complex; leading to its degradation by the proteasome.

Its subcellular location is the cytoplasm. It localises to the nucleus. It catalyses the reaction a 2'-deoxyribonucleoside 5'-diphosphate + [thioredoxin]-disulfide + H2O = a ribonucleoside 5'-diphosphate + [thioredoxin]-dithiol. In terms of biological role, provides the precursors necessary for DNA synthesis. Catalyzes the biosynthesis of deoxyribonucleotides from the corresponding ribonucleotides. Inhibits Wnt signaling. The sequence is that of Ribonucleoside-diphosphate reductase subunit M2 (RRM2) from Mesocricetus auratus (Golden hamster).